We begin with the raw amino-acid sequence, 508 residues long: Photosystem II CP47 reaction center protein (508 aa).

Transmembrane regions (helical) follow at residues 21 to 36 (AVHL…WAGS), 101 to 115 (ILLS…IWHW), 140 to 156 (GIHL…FGAF), 203 to 218 (IAAG…FHLS), 237 to 252 (VLSS…AFVV), and 457 to 472 (WFAL…HGAR).

The protein belongs to the PsbB/PsbC family. PsbB subfamily. PSII is composed of 1 copy each of membrane proteins PsbA, PsbB, PsbC, PsbD, PsbE, PsbF, PsbH, PsbI, PsbJ, PsbK, PsbL, PsbM, PsbT, PsbX, PsbY, PsbZ, Psb30/Ycf12, at least 3 peripheral proteins of the oxygen-evolving complex and a large number of cofactors. It forms dimeric complexes. Requires Binds multiple chlorophylls. PSII binds additional chlorophylls, carotenoids and specific lipids. as cofactor.

Its subcellular location is the plastid. It localises to the chloroplast thylakoid membrane. In terms of biological role, one of the components of the core complex of photosystem II (PSII). It binds chlorophyll and helps catalyze the primary light-induced photochemical processes of PSII. PSII is a light-driven water:plastoquinone oxidoreductase, using light energy to abstract electrons from H(2)O, generating O(2) and a proton gradient subsequently used for ATP formation. The protein is Photosystem II CP47 reaction center protein of Nephroselmis olivacea (Green alga).